The sequence spans 156 residues: Small ribosomal subunit protein uS7 (156 aa).

This sequence belongs to the universal ribosomal protein uS7 family. As to quaternary structure, part of the 30S ribosomal subunit. Contacts proteins S9 and S11.

One of the primary rRNA binding proteins, it binds directly to 16S rRNA where it nucleates assembly of the head domain of the 30S subunit. Is located at the subunit interface close to the decoding center, probably blocks exit of the E-site tRNA. The polypeptide is Small ribosomal subunit protein uS7 (Treponema denticola (strain ATCC 35405 / DSM 14222 / CIP 103919 / JCM 8153 / KCTC 15104)).